The following is a 653-amino-acid chain: Structural protein ORF653 (653 aa).

Positions 300–330 form a coiled coil; sequence AKEETKQETKQETGKEEEEKKETKQESQEQL. Positions 302 to 326 are enriched in basic and acidic residues; the sequence is EETKQETKQETGKEEEEKKETKQES. 3 disordered regions span residues 302–329, 344–388, and 626–653; these read EETK…SQEQ, GQPA…ENTP, and AGQQ…VKLS. Low complexity predominate over residues 371–381; the sequence is EENNAEAPQQR. A coiled-coil region spans residues 505–649; sequence KEQELYKELD…EEEEEEGNDT (145 aa). Residues 630–647 show a composition bias toward acidic residues; that stretch reads EETDETTEEEEEEEEEGN.

It is found in the virion. The sequence is that of Structural protein ORF653 from Acidianus two-tailed virus (ATV).